Reading from the N-terminus, the 326-residue chain is D-alanine--D-alanine ligase (326 aa).

The ATP-grasp domain occupies 121 to 320 (ISVLRPYGIK…LKDLFGSTIE (200 aa)). 149 to 204 (VDKVGLPCFVKANRAGSSFGVTKVKTEDEIISAAKTAFTEDDEAIIESFLDGTEVS) is a binding site for ATP. 3 residues coordinate Mg(2+): Glu275, Glu287, and Asn289.

It belongs to the D-alanine--D-alanine ligase family. Mg(2+) is required as a cofactor. Mn(2+) serves as cofactor.

It is found in the cytoplasm. The enzyme catalyses 2 D-alanine + ATP = D-alanyl-D-alanine + ADP + phosphate + H(+). It functions in the pathway cell wall biogenesis; peptidoglycan biosynthesis. In terms of biological role, cell wall formation. The polypeptide is D-alanine--D-alanine ligase (Christiangramia forsetii (strain DSM 17595 / CGMCC 1.15422 / KT0803) (Gramella forsetii)).